A 153-amino-acid polypeptide reads, in one-letter code: Transcriptional repressor NrdR (153 aa).

The segment at 3 to 34 (CPSCFHNGTRVLDSRPVDEGRSIRRRRECESC) is a zinc-finger region. Positions 49 to 139 (LIVVKKEGTR…VYRQFKDLNV (91 aa)) constitute an ATP-cone domain.

This sequence belongs to the NrdR family. The cofactor is Zn(2+).

In terms of biological role, negatively regulates transcription of bacterial ribonucleotide reductase nrd genes and operons by binding to NrdR-boxes. This is Transcriptional repressor NrdR from Bacillus cytotoxicus (strain DSM 22905 / CIP 110041 / 391-98 / NVH 391-98).